A 283-amino-acid polypeptide reads, in one-letter code: Pantothenate synthetase (283 aa).

30-37 (MGTLHDGH) lines the ATP pocket. The active-site Proton donor is the histidine 37. Residue glutamine 61 coordinates (R)-pantoate. Glutamine 61 is a beta-alanine binding site. An ATP-binding site is contributed by 148–151 (GLKD). Position 154 (glutamine 154) interacts with (R)-pantoate. 185-188 (MSSR) is a binding site for ATP.

The protein belongs to the pantothenate synthetase family. Homodimer.

It localises to the cytoplasm. It carries out the reaction (R)-pantoate + beta-alanine + ATP = (R)-pantothenate + AMP + diphosphate + H(+). It participates in cofactor biosynthesis; (R)-pantothenate biosynthesis; (R)-pantothenate from (R)-pantoate and beta-alanine: step 1/1. Functionally, catalyzes the condensation of pantoate with beta-alanine in an ATP-dependent reaction via a pantoyl-adenylate intermediate. This chain is Pantothenate synthetase, found in Leptospira biflexa serovar Patoc (strain Patoc 1 / Ames).